The sequence spans 257 residues: Imidazole glycerol phosphate synthase subunit HisF (257 aa).

Residues Asp11 and Asp130 contribute to the active site.

Belongs to the HisA/HisF family. As to quaternary structure, heterodimer of HisH and HisF.

It localises to the cytoplasm. It catalyses the reaction 5-[(5-phospho-1-deoxy-D-ribulos-1-ylimino)methylamino]-1-(5-phospho-beta-D-ribosyl)imidazole-4-carboxamide + L-glutamine = D-erythro-1-(imidazol-4-yl)glycerol 3-phosphate + 5-amino-1-(5-phospho-beta-D-ribosyl)imidazole-4-carboxamide + L-glutamate + H(+). It functions in the pathway amino-acid biosynthesis; L-histidine biosynthesis; L-histidine from 5-phospho-alpha-D-ribose 1-diphosphate: step 5/9. Functionally, IGPS catalyzes the conversion of PRFAR and glutamine to IGP, AICAR and glutamate. The HisF subunit catalyzes the cyclization activity that produces IGP and AICAR from PRFAR using the ammonia provided by the HisH subunit. The sequence is that of Imidazole glycerol phosphate synthase subunit HisF from Shewanella putrefaciens (strain CN-32 / ATCC BAA-453).